Here is a 1038-residue protein sequence, read N- to C-terminus: MKQRISALDLLLLARELKQDLEGYRLSNIYNIADSSKQFLLKFNKPDSKLNVVVDCGLRIYLTEFSRPIPPTPSGFVVKLRKHLKAKRLTALKQVDQDRILVLQFADGHFYLVLEFFSAGNVILLDENRRIMALQRVVLEHENKVGQIYEMFDESLFTTNNESADESIEKNRKAEYTSELVNEWIKAVQAKYESDITVIKQLNIQGKEGAKKKKVKVPSIHKLLLSKVPHLSSDLLSKNLKVFNIDPSESCLNLLEETDSLAELLNSTQLEYNQLLTTTDRKGYILAKRNENYISEKDTADLEFIYDTFHPFKPYINGGDTDSSCIIEVEGPYNRTLDKFFSTIESSKYALRIQNQESQAQKKIDDARAENDRKIQALLDVQELNERKGHLIIENAPLIEEVKLAVQGLIDQQMDWNTIEKLIKSEQKKGNRIAQLLNLPLNLKQNKISVKLDLSSKELNTSSDEDNESEGNTTDSSSDSDSEDMESSKERSTKSMKRKSNEKINVTIDLGLSAYANATEYFNIKKTSAQKQKKVEKNVGKAMKNIEVKIDQQLKKKLKDSHSVLKKIRTPYFFEKYSWFISSEGFLVMMGKSPAETDQIYSKYIEDDDIYMSNSFNSHVWIKNPEKTEVPPNTLMQAGILCMSSSEAWSKKISSSPWWCFAKNVSKFDGSDNSILPEGAFRLKNENDQNHLPPAQLVMGFGFLWKVKTSGNEDNGDDDEEEEEEEEEEEEEEEEEEEEEEEEKEEEEKEEEQQQDEDDSNEVNGLEKGGDSNDSTKNNSFEHDNLEKDIEKHCTISSDTDSDSGNAKAKNDNSSTQRILDEPGVPISLIENINSNVRGKRGKLKKIQKKYADQDETERLLRLEALGTLKGIEKQQQRKKEEIMKREVREDRKNKREKQRRLQALKFTKKEKARVNYDKHKSELKPSLDKGDVVDDIIPVFAPWPALLKYKYKVKIQPGSAKKTKTLTEILHYFKSRPLDGSSTDNEMDWPQEHEMIKGLKEQDLVLLLCVDKLKVTIAGQKSTKNGGNSSKKGKKKR.

A coiled-coil region spans residues 350–383; that stretch reads ALRIQNQESQAQKKIDDARAENDRKIQALLDVQE. Disordered stretches follow at residues 459–499, 708–824, and 877–898; these read LNTS…MKRK, KTSG…DEPG, and QRKK…KREK. The stretch at 713–768 forms a coiled coil; the sequence is EDNGDDDEEEEEEEEEEEEEEEEEEEEEEEEKEEEEKEEEQQQDEDDSNEVNGLEK. Acidic residues predominate over residues 714 to 761; the sequence is DNGDDDEEEEEEEEEEEEEEEEEEEEEEEEKEEEEKEEEQQQDEDDSN. The span at 780–794 shows a compositional bias: basic and acidic residues; it reads SFEHDNLEKDIEKHC. Polar residues predominate over residues 795-805; it reads TISSDTDSDSG. Position 797 is a phosphoserine (Ser-797). The stretch at 830–912 forms a coiled coil; the sequence is IENINSNVRG…QALKFTKKEK (83 aa). Residues 877–894 are compositionally biased toward basic and acidic residues; the sequence is QRKKEEIMKREVREDRKN.

The protein belongs to the NEMF family. In terms of assembly, component of the ribosome quality control complex (RQC), composed of the E3 ubiquitin ligase RKR1/LTN1, RQC1 and RQC2, as well as CDC48 and its ubiquitin-binding cofactors associated with the 60S ribosomal subunit. RQC2 binds to the 40S-binding surface of tRNAs.

Its subcellular location is the cytoplasm. Key component of the ribosome quality control complex (RQC), a ribosome-associated complex that mediates the extraction of incompletely synthesized nascent chains from stalled ribosomes as well as their ubiquitin-mediated proteasomal degradation. Thereby, frees 60S subunit ribosomes from the stalled translation complex and prevents the accumulation of nascent polypeptide chains that are potentially toxic for the cell. Within the RQC complex, RQC2 specifically binds stalled 60S ribosomal subunits by recognizing an exposed, nascent chain-conjugated tRNA moiety and promotes the recruitment of RKR1/LTN1 to stalled 60S subunits. Following binding to stalled 60S ribosomal subunits, RQC2 mediates CAT tailing by recruiting alanine- and threonine-charged tRNA to the A-site and directing the elongation of stalled nascent chains independently of mRNA or 40S subunits, leading to non-templated C-terminal Ala and Thr extensions (CAT tails). CAT tails promote the RKR1/LTN1-mediated ubiquitination of incompletely synthesized nascent polypeptides: CAT tailing facilitates RKR1/LTN1-dependent ubiquitination by exposing lysine residues that would otherwise remain buried in the ribosomal exit tunnel. Following ubiquitination, incompletely synthesized nascent polypeptides are recognized by CDC48 and degraded by the proteasome. CAT-tailed proteins tend to aggregate and sequester chaperones and can induce proteotoxic stress; their RKR1/LTN1-dependent ubiquitination and degradation is required to prevent proteotoxic stress. The chain is Ribosome quality control complex subunit 2 from Saccharomyces cerevisiae (strain ATCC 204508 / S288c) (Baker's yeast).